Here is a 158-residue protein sequence, read N- to C-terminus: Ribosome maturation factor RimP (158 aa).

Belongs to the RimP family.

The protein localises to the cytoplasm. Functionally, required for maturation of 30S ribosomal subunits. In Leuconostoc mesenteroides subsp. mesenteroides (strain ATCC 8293 / DSM 20343 / BCRC 11652 / CCM 1803 / JCM 6124 / NCDO 523 / NBRC 100496 / NCIMB 8023 / NCTC 12954 / NRRL B-1118 / 37Y), this protein is Ribosome maturation factor RimP.